The chain runs to 42 residues: Photosystem II reaction center protein J (42 aa).

A helical membrane pass occupies residues 10 to 30 (IPLWLVATVAGLAVIALLGVF).

Belongs to the PsbJ family. In terms of assembly, PSII is composed of 1 copy each of membrane proteins PsbA, PsbB, PsbC, PsbD, PsbE, PsbF, PsbH, PsbI, PsbJ, PsbK, PsbL, PsbM, PsbT, PsbX, PsbY, PsbZ, Psb30/Ycf12, at least 3 peripheral proteins of the oxygen-evolving complex and a large number of cofactors. It forms dimeric complexes.

Its subcellular location is the plastid. The protein localises to the chloroplast thylakoid membrane. Its function is as follows. One of the components of the core complex of photosystem II (PSII). PSII is a light-driven water:plastoquinone oxidoreductase that uses light energy to abstract electrons from H(2)O, generating O(2) and a proton gradient subsequently used for ATP formation. It consists of a core antenna complex that captures photons, and an electron transfer chain that converts photonic excitation into a charge separation. This Chlorokybus atmophyticus (Soil alga) protein is Photosystem II reaction center protein J.